Reading from the N-terminus, the 106-residue chain is TYVIAEPCVDVKDKACIEECPVDCIYEGARMLYIHPDECVDCGACEPVCPVEAIYYEDDVPDQWSSYAQANADFFAELGSPGGASKVGQTDNDPQAIKDLPPQGED.

Positions 8 and 16 each coordinate [3Fe-4S] cluster. [4Fe-4S] cluster is bound by residues cysteine 20, cysteine 39, cysteine 42, and cysteine 45. One can recognise a 4Fe-4S ferredoxin-type domain in the interval 30-59; sequence RMLYIHPDECVDCGACEPVCPVEAIYYEDD. Position 49 (cysteine 49) interacts with [3Fe-4S] cluster. Positions 81–106 are disordered; the sequence is PGGASKVGQTDNDPQAIKDLPPQGED.

Requires [4Fe-4S] cluster as cofactor. It depends on [3Fe-4S] cluster as a cofactor.

In terms of biological role, ferredoxins are iron-sulfur proteins that transfer electrons in a wide variety of metabolic reactions. This chain is Ferredoxin (fdxA), found in Mycolicibacterium smegmatis (Mycobacterium smegmatis).